The sequence spans 205 residues: uncharacterized protein (205 aa).

A signal peptide spans 1 to 40; that stretch reads MSAGKSYRKKMKQRRMNMKISKYALGILMLSLVFVLSACG. A disordered region spans residues 44 to 82; that stretch reads STKESTHDNHSDSSTHEEMDHSGSADVPEGLQESKNPKY. Basic and acidic residues predominate over residues 47 to 66; that stretch reads ESTHDNHSDSSTHEEMDHSG.

This is an uncharacterized protein from Bacillus subtilis (strain 168).